Reading from the N-terminus, the 239-residue chain is MKNKRSQNSPYVTPNNPYLTLEKALGYSFKDKRLLEQALTHKSCKLALNNERLEFLGDAVLGLVIGELLYHKFYQYDEGKLSKLRASIVSAHGFTKLAKAIALQDYLRVSSSEEISNGREKPSILSSAFEALMAGVYLEAGLAKVRKIIQNLLNRAYKRLDLEHLFMDYKTALQELTQAQFCVIPTYQLLQEKGPDHHKEFEMALYIQDKMYATAKGKSKKEAEQQCAYQALQKLKEAK.

One can recognise an RNase III domain in the interval 18–141; sequence YLTLEKALGY…LMAGVYLEAG (124 aa). Glu54 contacts Mg(2+). Asp58 is an active-site residue. Mg(2+) contacts are provided by Ser127 and Glu130. Glu130 is an active-site residue. One can recognise a DRBM domain in the interval 168–237; the sequence is DYKTALQELT…AYQALQKLKE (70 aa).

Belongs to the ribonuclease III family. Homodimer. Requires Mg(2+) as cofactor.

It is found in the cytoplasm. The enzyme catalyses Endonucleolytic cleavage to 5'-phosphomonoester.. Functionally, digests double-stranded RNA. Involved in the processing of primary rRNA transcript to yield the immediate precursors to the large and small rRNAs (23S and 16S). Processes some mRNAs, and tRNAs when they are encoded in the rRNA operon. Processes pre-crRNA and tracrRNA of type II CRISPR loci if present in the organism. The polypeptide is Ribonuclease 3 (Helicobacter pylori (strain P12)).